The primary structure comprises 310 residues: Protein DOS2 (310 aa).

Composition is skewed to basic and acidic residues over residues 15 to 26 (DKISNSHTKETG) and 135 to 146 (SNDKDENSKENE). Disordered regions lie at residues 15-45 (DKIS…KTNE) and 131-151 (AEND…AVGG). The 53-residue stretch at 176–228 (QLDPFDVDEKTEEICSILQGDKDISKLMNDIVPHKISYKDFWHIYFLQRNKIL) folds into the BSD domain. Residues 240–310 (KKEKETEEKE…KDDDDDDDWE (71 aa)) are disordered. A compositionally biased stretch (acidic residues) spans 247–263 (EKEVEWDDEEEEEDDDK). Composition is skewed to basic and acidic residues over residues 264–276 (VEAV…KGET) and 284–300 (GLKD…KDES). The segment covering 301-310 (KDDDDDDDWE) has biased composition (acidic residues).

In terms of biological role, acts in ubiquitin metabolism and is necessary for the control of single-copy DNA replication. This Saccharomyces cerevisiae (strain ATCC 204508 / S288c) (Baker's yeast) protein is Protein DOS2 (DOS2).